The following is a 237-amino-acid chain: 2-C-methyl-D-erythritol 4-phosphate cytidylyltransferase (237 aa).

This sequence belongs to the IspD/TarI cytidylyltransferase family. IspD subfamily.

It catalyses the reaction 2-C-methyl-D-erythritol 4-phosphate + CTP + H(+) = 4-CDP-2-C-methyl-D-erythritol + diphosphate. Its pathway is isoprenoid biosynthesis; isopentenyl diphosphate biosynthesis via DXP pathway; isopentenyl diphosphate from 1-deoxy-D-xylulose 5-phosphate: step 2/6. In terms of biological role, catalyzes the formation of 4-diphosphocytidyl-2-C-methyl-D-erythritol from CTP and 2-C-methyl-D-erythritol 4-phosphate (MEP). This Acidithiobacillus ferrooxidans (strain ATCC 23270 / DSM 14882 / CIP 104768 / NCIMB 8455) (Ferrobacillus ferrooxidans (strain ATCC 23270)) protein is 2-C-methyl-D-erythritol 4-phosphate cytidylyltransferase.